The sequence spans 376 residues: Lipoprotein p33 (376 aa).

Positions 1–30 are cleaved as a signal peptide; it reads MKIKKIKLLKALALTGAFGIVATVPVIVYS. Cys-31 is lipidated: N-palmitoyl cysteine. Cys-31 carries S-diacylglycerol cysteine lipidation. A disordered region spans residues 35–59; sequence DNNGGTGDNNTGGGGSGTDQQQGTT. Over residues 38 to 51 the composition is skewed to gly residues; that stretch reads GGTGDNNTGGGGSG.

The protein belongs to the p35 lipoprotein family.

Its subcellular location is the cell membrane. In Malacoplasma penetrans (Mycoplasma penetrans), this protein is Lipoprotein p33.